Consider the following 425-residue polypeptide: SWI/SNF and RSC complexes subunit ssr3 (425 aa).

Residues M1 to N16 are compositionally biased toward polar residues. The interval M1 to K23 is disordered. Positions E201–P278 constitute an SWIB/MDM2 domain.

Belongs to the SMARCD family. As to quaternary structure, component of the RSC complex composed of at least arp9, arp42, rsc1, rsc4, rsc7, rsc9, rsc58, sfh1, snf21, ssr1, ssr2, ssr3 and ssr4. The complex interacts with histone and histone variant components of centromeric chromatin. Component of the SWI/SNF global transcription activator complex composed of at least arp9, arp42, snf5, snf22, snf30, sbf59, sol1, ssr1, ssr2, ssr3, ssr4 and tfg3.

The protein localises to the cytoplasm. Its subcellular location is the nucleus. In terms of biological role, component of the chromatin structure remodeling complex (RSC), which is involved in transcription regulation and nucleosome positioning. Controls particularly membrane and organelle development genes. Part of the SWI/SNF complex, an ATP-dependent chromatin remodeling complex, required for the positive and negative regulation of gene expression of a large number of genes. It changes chromatin structure by altering DNA-histone contacts within a nucleosome, leading eventually to a change in nucleosome position, thus facilitating or repressing binding of gene-specific transcription factors. The sequence is that of SWI/SNF and RSC complexes subunit ssr3 (ssr3) from Schizosaccharomyces pombe (strain 972 / ATCC 24843) (Fission yeast).